Here is a 262-residue protein sequence, read N- to C-terminus: ATP synthase subunit a (262 aa).

7 consecutive transmembrane segments (helical) span residues 30–50 (ITSLTNIAILFIIGLLVLTIF), 64–84 (WNIVLETWVASILGIVKDQIG), 91–111 (LIYFPLIFTFFSFVFISNILG), 123–143 (ISVTLGLSIAIMIGVTLIGFS), 149–169 (FFSLFVPKGTPLALVPLLVLI), 195–215 (LFGVISALSVSACIAVSSLLL), and 220–240 (ITLPLAVLVVLYGLELLVALL).

The protein belongs to the ATPase A chain family. In terms of assembly, F-type ATPases have 2 components, CF(1) - the catalytic core - and CF(0) - the membrane proton channel. CF(1) has five subunits: alpha(3), beta(3), gamma(1), delta(1), epsilon(1). CF(0) has three main subunits: a, b and c.

The protein resides in the mitochondrion inner membrane. Its function is as follows. Mitochondrial membrane ATP synthase (F(1)F(0) ATP synthase or Complex V) produces ATP from ADP in the presence of a proton gradient across the membrane which is generated by electron transport complexes of the respiratory chain. F-type ATPases consist of two structural domains, F(1) - containing the extramembraneous catalytic core and F(0) - containing the membrane proton channel, linked together by a central stalk and a peripheral stalk. During catalysis, ATP synthesis in the catalytic domain of F(1) is coupled via a rotary mechanism of the central stalk subunits to proton translocation. Key component of the proton channel; it may play a direct role in the translocation of protons across the membrane. The sequence is that of ATP synthase subunit a (ATP6) from Allomyces macrogynus.